The chain runs to 657 residues: Pyoverdine export ATP-binding/permease protein PvdT (657 aa).

Positions 6 to 245 constitute an ABC transporter domain; the sequence is IDLRGIRKSY…RSVNPAALQA (240 aa). 43–50 provides a ligand contact to ATP; sequence GASGSGKS. 4 consecutive transmembrane segments (helical) span residues 285–305, 539–559, 590–610, and 620–640; these read ALTL…LAVG, IAAI…LMTV, LSVV…AALL, and LPAV…FGFM.

Belongs to the ABC transporter superfamily. Macrolide exporter (TC 3.A.1.122) family. As to quaternary structure, part of the tripartite efflux system PvdRT-OpmQ, which is composed of an inner membrane component with both ATPase and permease domains, PvdT, a periplasmic membrane fusion protein, PvdR, and an outer membrane component, OpmQ.

It is found in the cell inner membrane. In terms of biological role, part of the tripartite efflux system PvdRT-OpmQ required for the secretion into the extracellular milieu of the siderophore pyoverdine (PVD), which is involved in iron acquisition. This subunit binds PVD and drives its secretion by hydrolyzing ATP. The system is responsible for export of newly synthesized PVD after the final steps of biosynthesis have taken place in the periplasm. It is also responsible for recycling of PVD after internalization of ferri-PVD into the periplasm by the outer-membrane receptor FpvA and release of iron from PVD, thus making PVD available for new cycles of iron uptake. The protein is Pyoverdine export ATP-binding/permease protein PvdT of Pseudomonas syringae pv. syringae (strain B728a).